The chain runs to 267 residues: 3-methyl-2-oxobutanoate hydroxymethyltransferase (267 aa).

Mg(2+)-binding residues include Asp41 and Asp80. 3-methyl-2-oxobutanoate-binding positions include Asp41 to Ser42, Asp80, and Lys109. Glu111 lines the Mg(2+) pocket. Residue Glu178 is the Proton acceptor of the active site.

The protein belongs to the PanB family. Homodecamer; pentamer of dimers. Requires Mg(2+) as cofactor.

The protein resides in the cytoplasm. The enzyme catalyses 3-methyl-2-oxobutanoate + (6R)-5,10-methylene-5,6,7,8-tetrahydrofolate + H2O = 2-dehydropantoate + (6S)-5,6,7,8-tetrahydrofolate. It participates in cofactor biosynthesis; (R)-pantothenate biosynthesis; (R)-pantoate from 3-methyl-2-oxobutanoate: step 1/2. Its function is as follows. Catalyzes the reversible reaction in which hydroxymethyl group from 5,10-methylenetetrahydrofolate is transferred onto alpha-ketoisovalerate to form ketopantoate. This is 3-methyl-2-oxobutanoate hydroxymethyltransferase from Kosmotoga olearia (strain ATCC BAA-1733 / DSM 21960 / TBF 19.5.1).